A 1272-amino-acid chain; its full sequence is Fused isobutyryl-CoA mutase (1272 aa).

In terms of domain architecture, B12-binding spans Arg20–Ala158. Residue His33 coordinates adenosylcob(III)alamin. The segment at Glu163–Lys536 is GTPase chaperone MeaI. The disordered stretch occupies residues Gly193–Ala240. Positions Ala221–Ala240 are enriched in low complexity. Gly334–Ser339 is a GTP binding site. 4 residues coordinate Mg(2+): Ser338, Ile363, Asp364, and Asp377. Arg380 serves as a coordination point for GTP. The Mg(2+) site is built by Glu429 and Thr430. Position 476 to 479 (Asn476 to Asp479) interacts with GTP. The segment at His537–Pro758 is linker. Low complexity-rich tracts occupy residues Thr614–Ala631 and Ala639–Thr663. A disordered region spans residues Thr614–Asn667. Residues Phe766, Arg801, Arg907, Tyr951, Ser1000, Arg1035, and Lys1040 each coordinate substrate. Positions 1152 and 1271 each coordinate GTP.

It belongs to the IcmF family. Homodimer. It depends on adenosylcob(III)alamin as a cofactor. The cofactor is Mg(2+).

The enzyme catalyses 2-methylpropanoyl-CoA = butanoyl-CoA. It catalyses the reaction GTP + H2O = GDP + phosphate + H(+). Catalyzes the reversible interconversion of isobutyryl-CoA and n-butyryl-CoA, using radical chemistry. Also exhibits GTPase activity, associated with its G-protein domain (MeaI) that functions as a chaperone that assists cofactor delivery and proper holo-enzyme assembly. Does not exhibit methylmalonyl-CoA mutase (MCM) activity. This is Fused isobutyryl-CoA mutase from Paraburkholderia xenovorans (strain LB400).